The primary structure comprises 437 residues: Arginine biosynthesis bifunctional protein ArgJ, mitochondrial (437 aa).

Residues T173, K200, T211, E297, N432, and S437 each coordinate substrate. T211 acts as the Nucleophile in catalysis.

The protein belongs to the ArgJ family. In terms of assembly, heterodimer of an alpha and a beta chain. Post-translationally, the alpha and beta chains are autoproteolytically processed from a single precursor protein within the mitochondrion.

The protein localises to the mitochondrion matrix. The catalysed reaction is N(2)-acetyl-L-ornithine + L-glutamate = N-acetyl-L-glutamate + L-ornithine. It catalyses the reaction L-glutamate + acetyl-CoA = N-acetyl-L-glutamate + CoA + H(+). Its pathway is amino-acid biosynthesis; L-arginine biosynthesis; L-ornithine and N-acetyl-L-glutamate from L-glutamate and N(2)-acetyl-L-ornithine (cyclic): step 1/1. It participates in amino-acid biosynthesis; L-arginine biosynthesis; N(2)-acetyl-L-ornithine from L-glutamate: step 1/4. In terms of biological role, catalyzes two activities which are involved in the cyclic version of arginine biosynthesis: the synthesis of acetylglutamate from glutamate and acetyl-CoA, and of ornithine by transacetylation between acetylornithine and glutamate. The polypeptide is Arginine biosynthesis bifunctional protein ArgJ, mitochondrial (Zygosaccharomyces rouxii (strain ATCC 2623 / CBS 732 / NBRC 1130 / NCYC 568 / NRRL Y-229)).